The primary structure comprises 279 residues: Movement protein (279 aa).

The tract at residues 246 to 279 (SESEELNVESPPAAIGSSSASRSEAFRPQVVNGL) is disordered. Positions 254-268 (ESPPAAIGSSSASRS) are enriched in low complexity.

It belongs to the cucumovirus movement protein family.

It is found in the host cell junction. It localises to the host plasmodesma. In terms of biological role, transports viral genome to neighboring plant cells directly through plasmosdesmata, without any budding. The movement protein allows efficient cell to cell propagation, by bypassing the host cell wall barrier. Acts by forming a tubular structure at the host plasmodesmata, enlarging it enough to allow free passage of virion capsids. This is Movement protein from Cucumber mosaic virus (strain N) (CMV).